An 89-amino-acid chain; its full sequence is Dynein light chain 1, cytoplasmic (89 aa).

The protein belongs to the dynein light chain family. As to quaternary structure, interacts with spn-F. Forms ternary complexes with spn-F and IKKepsilon. Ubiquitous.

It localises to the cytoplasm. Its subcellular location is the cytoskeleton. In terms of biological role, acts as a non-catalytic accessory component of a dynein complex. This Drosophila melanogaster (Fruit fly) protein is Dynein light chain 1, cytoplasmic (ctp).